A 407-amino-acid polypeptide reads, in one-letter code: RNA-binding motif, single-stranded-interacting protein 2 (407 aa).

An N-acetylmethionine modification is found at Met1. Residues 14–51 are disordered; sequence FGYNKNNKKPYVSLSQQMAPPSPSSSTPNSSSGSTAHD. The span at 37-47 shows a compositional bias: low complexity; it reads SSSTPNSSSGS. RRM domains are found at residues 56 to 129 and 135 to 220; these read TNLY…MAKQ and TNLY…FADG. A Phosphoserine modification is found at Ser106. Ser280 and Ser285 each carry phosphoserine. The segment covering 374-392 has biased composition (low complexity); sequence PSSSVSVEESGSQQSQVPV. The segment at 374-398 is disordered; sequence PSSSVSVEESGSQQSQVPVDAPSEH.

The protein resides in the nucleus. The protein is RNA-binding motif, single-stranded-interacting protein 2 (RBMS2) of Bos taurus (Bovine).